Reading from the N-terminus, the 219-residue chain is Leucyl/phenylalanyl-tRNA--protein transferase (219 aa).

It belongs to the L/F-transferase family.

The protein localises to the cytoplasm. The enzyme catalyses N-terminal L-lysyl-[protein] + L-leucyl-tRNA(Leu) = N-terminal L-leucyl-L-lysyl-[protein] + tRNA(Leu) + H(+). It catalyses the reaction N-terminal L-arginyl-[protein] + L-leucyl-tRNA(Leu) = N-terminal L-leucyl-L-arginyl-[protein] + tRNA(Leu) + H(+). It carries out the reaction L-phenylalanyl-tRNA(Phe) + an N-terminal L-alpha-aminoacyl-[protein] = an N-terminal L-phenylalanyl-L-alpha-aminoacyl-[protein] + tRNA(Phe). Functionally, functions in the N-end rule pathway of protein degradation where it conjugates Leu, Phe and, less efficiently, Met from aminoacyl-tRNAs to the N-termini of proteins containing an N-terminal arginine or lysine. The sequence is that of Leucyl/phenylalanyl-tRNA--protein transferase from Leptospira interrogans serogroup Icterohaemorrhagiae serovar copenhageni (strain Fiocruz L1-130).